The primary structure comprises 475 residues: UDP-N-acetylmuramate--L-alanine ligase (475 aa).

114–120 (GTHGKTT) contributes to the ATP binding site.

Belongs to the MurCDEF family.

It is found in the cytoplasm. It carries out the reaction UDP-N-acetyl-alpha-D-muramate + L-alanine + ATP = UDP-N-acetyl-alpha-D-muramoyl-L-alanine + ADP + phosphate + H(+). Its pathway is cell wall biogenesis; peptidoglycan biosynthesis. In terms of biological role, cell wall formation. In Bartonella quintana (strain Toulouse) (Rochalimaea quintana), this protein is UDP-N-acetylmuramate--L-alanine ligase.